The sequence spans 184 residues: Lipocalin-15 (184 aa).

The first 20 residues, 1–20, serve as a signal peptide directing secretion; it reads MMSFLLGAILTLLWAPTAQA. Cysteines 83 and 176 form a disulfide.

It belongs to the calycin superfamily. Lipocalin family.

Its subcellular location is the secreted. The polypeptide is Lipocalin-15 (LCN15) (Homo sapiens (Human)).